The following is a 411-amino-acid chain: SKA complex subunit 3 (411 aa).

Residues serine 34, serine 119, serine 138, serine 154, and serine 158 each carry the phosphoserine modification. Residues 102-410 (YQARDKEDSG…GTRGAANKEN (309 aa)) form a binds the NDC80 complex region. Phosphothreonine is present on residues threonine 189 and threonine 216. The tract at residues 195-410 (PSVQVLKTPR…GTRGAANKEN (216 aa)) is binds microtubules and contacts the microtubule-binding domain of SKA1. Serine 289 is subject to Phosphoserine. Threonine 297 carries the post-translational modification Phosphothreonine. Serine 324 and serine 352 each carry phosphoserine. Residues 349-410 (EPPSSAITSC…GTRGAANKEN (62 aa)) form a required for localization to kinetochores region. Threonine 363 carries the phosphothreonine modification.

Belongs to the SKA3 family. As to quaternary structure, component of the SKA complex, composed of SKA1, SKA2 and SKA3. The SKA complex is a homodimer organized around a central W-shaped coiled-coil structure, formed by the interacting domains of SKA1, SKA2, and SKA3, each end of the 'W' is extended further by the C-terminal microtubule-binding domains of SKA1 and SKA3; the complex forms extended structures on microtubules. Interacts with the NDC80-NUF2 heterodimer of the NDC80 complex (via coiled coils); the interaction localizes the SKA complex to the kinetochore and is required to establish kinetochore-microtubule end-on attachments. Interacts with polo-like kinase PLK1.

Its subcellular location is the cytoplasm. The protein resides in the cytoskeleton. The protein localises to the spindle. It is found in the chromosome. It localises to the centromere. Its subcellular location is the kinetochore. The protein resides in the microtubule organizing center. The protein localises to the centrosome. In terms of biological role, component of the SKA complex, a microtubule plus end-binding complex of the outer kinetochore that stabilizes spindle microtubule-kinetochore attachments, promotes alignment of chromosomes at the mitotic spindle equator (chromosome congression) and assists suppression of the spindle assembly checkpoint. Kinetochores, consisting of a centromere-associated inner segment and a microtubule-contacting outer segment, play a crucial role in chromosome segregation by mediating the physical connection between centromeric DNA and spindle microtubules. The outer kinetochore is made up of the ten-subunit KMN network complex, comprising the MIS12, NDC80 and KNL1 complexes, and auxiliary microtubule-associated components such as the SKA complex; together they connect the outer kinetochore with the inner kinetochore, bind microtubules, and mediate interactions with mitotic checkpoint proteins that delay anaphase until chromosomes are bioriented on the spindle. The SKA complex is loaded onto bioriented kinetochores and it facilitates chromosome congression by stabilizing microtubules together with MAPRE1, and end-on attachment of the NDC80 complex to depolymerizing spindle microtubules, thereby assisting the poleward-moving kinetochore in withstanding microtubule pulling forces. The complex associates with dynamic microtubule plus-ends and can track both depolymerizing and elongating microtubules. The complex recruits protein phosphatase 1 (PP1) to the kinetochore in prometaphase and metaphase, to oppose spindle assembly checkpoint signaling and promote the onset of anaphase. Within the complex, binds microtubules but with a much lower affinity than SKA1. Promotes stability of the polo-like kinase PLK1 protein. During meiosis the SKA complex stabilizes the meiotic spindle and is required for its migration to the cortex. This chain is SKA complex subunit 3 (Ska3), found in Mus musculus (Mouse).